Consider the following 210-residue polypeptide: uncharacterized protein (210 aa).

One can recognise a Fe2OG dioxygenase domain in the interval 90 to 193 (KPDQIIVNEY…RISITFRNVI (104 aa)).

This is an uncharacterized protein from Acanthamoeba polyphaga (Amoeba).